Reading from the N-terminus, the 76-residue chain is Probable insulin-like peptide alpha-type 3 (76 aa).

Residues 1–18 (MFVLLIILSIILAQVTDA) form the signal peptide. 3 cysteine pairs are disulfide-bonded: C28–C58, C40–C71, and C46–C72.

This sequence belongs to the insulin family.

It is found in the secreted. In Caenorhabditis elegans, this protein is Probable insulin-like peptide alpha-type 3 (ins-23).